We begin with the raw amino-acid sequence, 264 residues long: Probable transcriptional regulatory protein PPA1157 (264 aa).

Belongs to the TACO1 family.

It is found in the cytoplasm. The protein is Probable transcriptional regulatory protein PPA1157 of Cutibacterium acnes (strain DSM 16379 / KPA171202) (Propionibacterium acnes).